The chain runs to 117 residues: Large ribosomal subunit protein uL18 (117 aa).

The protein belongs to the universal ribosomal protein uL18 family. In terms of assembly, part of the 50S ribosomal subunit; part of the 5S rRNA/L5/L18/L25 subcomplex. Contacts the 5S and 23S rRNAs.

Its function is as follows. This is one of the proteins that bind and probably mediate the attachment of the 5S RNA into the large ribosomal subunit, where it forms part of the central protuberance. This chain is Large ribosomal subunit protein uL18, found in Haemophilus influenzae (strain 86-028NP).